Consider the following 370-residue polypeptide: DNA-directed RNA polymerase II subunit GRINL1A (370 aa).

The tract at residues 1–20 (MSSLPRGFEPQTPEDLGQRS) is disordered. Residues 15-69 (DLGQRSLAELREMLKRQERLLRNVKFICKLPDKGKKISDAVTKLKAAIAEREEVR) are a coiled coil. The interval 29–68 (KRQERLLRNVKFICKLPDKGKKISDAVTKLKAAIAEREEV) is important for transcription repressor activity. Disordered regions lie at residues 93-172 (DGDR…ASEG), 204-226 (DPTE…WSGP), and 241-283 (KNPM…RRDR). Positions 101 to 131 (NSDQILDTSSPVPGCSSVANITSSQTTSRQQ) are enriched in polar residues. Basic and acidic residues predominate over residues 138 to 152 (RGGDAEAAEAEHTVS). Low complexity predominate over residues 155 to 170 (PTSSSGAPAPSSSQAS). The segment covering 205 to 214 (PTEHHSEGNR) has biased composition (basic and acidic residues). Residues 228-299 (KKPHYMEVLE…TAARLLPLHH (72 aa)) form an interaction with Pol II region. Residues 254–266 (VLPSQPRDSSSAC) show a composition bias toward polar residues. At serine 271 the chain carries Phosphoserine. The important for transcription repressor activity stretch occupies residues 300–315 (LPTQLLSIEESLALQR). Positions 303-328 (QLLSIEESLALQRQQKQSYEEIQAKL) form a coiled coil. The interval 316 to 341 (QQKQSYEEIQAKLAAQKLAERLNIKM) is interaction with Pol II. Residues 340-370 (KMQSYNPEGESSRKYREVRDEDDDQSSEDEF) are disordered. Positions 349–358 (ESSRKYREVR) are enriched in basic and acidic residues. The segment covering 359–370 (DEDDDQSSEDEF) has biased composition (acidic residues).

The protein belongs to the GRINL1 family. As to quaternary structure, component of the Pol II(G) complex, which contains the RNA polymerase II (Pol II) core complex subunits and POLR2M and appears to be an abundant form of Pol II. In terms of processing, dephosphorylated at Ser-271 by the PNUTS-PP1 complex, promoting RNA polymerase II transcription pause-release.

It localises to the nucleus. Its function is as follows. Appears to be a stable component of the Pol II(G) complex form of RNA polymerase II (Pol II). Pol II synthesizes mRNA precursors and many functional non-coding RNAs and is the central component of the basal RNA polymerase II transcription machinery. May play a role in Mediator complex-dependent regulation of transcription activation. Acts in vitro as a negative regulator of transcriptional activation; this repression is relieved by the Mediator complex, which restores Pol II(G) activator-dependent transcription to a level equivalent to that of Pol II. The sequence is that of DNA-directed RNA polymerase II subunit GRINL1A (POLR2M) from Bos taurus (Bovine).